A 360-amino-acid polypeptide reads, in one-letter code: Protein Wnt-2 (360 aa).

An N-terminal signal peptide occupies residues 1–25 (MNAPLGGIWLWLPLLLTWLTPEVSS). 11 disulfides stabilise this stretch: Cys-76–Cys-87, Cys-127–Cys-135, Cys-137–Cys-157, Cys-206–Cys-220, Cys-208–Cys-215, Cys-278–Cys-309, Cys-294–Cys-304, Cys-308–Cys-348, Cys-324–Cys-339, Cys-326–Cys-336, and Cys-331–Cys-332. A lipid anchor (O-palmitoleoyl serine; by PORCN) is attached at Ser-212. N-linked (GlcNAc...) asparagine glycosylation is present at Asn-295.

The protein belongs to the Wnt family. Palmitoleoylation is required for efficient binding to frizzled receptors. Depalmitoleoylation leads to Wnt signaling pathway inhibition.

Its subcellular location is the secreted. It is found in the extracellular space. The protein resides in the extracellular matrix. Its function is as follows. Ligand for members of the frizzled family of seven transmembrane receptors. Functions in the canonical Wnt signaling pathway that results in activation of transcription factors of the TCF/LEF family. The protein is Protein Wnt-2 (WNT2) of Dasypus novemcinctus (Nine-banded armadillo).